A 362-amino-acid chain; its full sequence is Adenosine deaminase (362 aa).

2 residues coordinate Zn(2+): histidine 19 and histidine 21. Residues histidine 21, aspartate 23, and glycine 181 each contribute to the substrate site. A Zn(2+)-binding site is contributed by histidine 208. Glutamate 211 serves as the catalytic Proton donor. Aspartate 300 contributes to the Zn(2+) binding site.

The protein belongs to the metallo-dependent hydrolases superfamily. Adenosine and AMP deaminases family. Adenosine deaminase subfamily. It depends on Zn(2+) as a cofactor.

It catalyses the reaction adenosine + H2O + H(+) = inosine + NH4(+). The enzyme catalyses 2'-deoxyadenosine + H2O + H(+) = 2'-deoxyinosine + NH4(+). Functionally, catalyzes the hydrolytic deamination of adenosine and 2-deoxyadenosine. The sequence is that of Adenosine deaminase from Mycobacterium sp. (strain MCS).